A 395-amino-acid chain; its full sequence is Elongation factor Tu (395 aa).

The 195-residue stretch at 10-204 (KEHANIGTIG…AVDDYIPTPE (195 aa)) folds into the tr-type G domain. Positions 19 to 26 (GHVDHGKT) are G1. GTP is bound at residue 19-26 (GHVDHGKT). Thr26 is a Mg(2+) binding site. Residues 60–64 (GITIN) are G2. The G3 stretch occupies residues 81-84 (DCPG). GTP is bound by residues 81 to 85 (DCPGH) and 136 to 139 (NKAD). A G4 region spans residues 136 to 139 (NKAD). A G5 region spans residues 174 to 176 (SAL).

It belongs to the TRAFAC class translation factor GTPase superfamily. Classic translation factor GTPase family. EF-Tu/EF-1A subfamily. As to quaternary structure, monomer.

It localises to the cytoplasm. It catalyses the reaction GTP + H2O = GDP + phosphate + H(+). In terms of biological role, GTP hydrolase that promotes the GTP-dependent binding of aminoacyl-tRNA to the A-site of ribosomes during protein biosynthesis. The sequence is that of Elongation factor Tu from Staphylococcus carnosus (strain TM300).